The primary structure comprises 224 residues: Cell division protein SepF (224 aa).

Positions 21–78 (DDYYEDDDRGPAPRGYRRPREDRFEDEGYAPRGYDGHPEDRRRDYDEPPAYRAGLAGG) are disordered. Residues 54–66 (YDGHPEDRRRDYD) are compositionally biased toward basic and acidic residues.

The protein belongs to the SepF family. Homodimer. Interacts with FtsZ.

The protein localises to the cytoplasm. Its function is as follows. Cell division protein that is part of the divisome complex and is recruited early to the Z-ring. Probably stimulates Z-ring formation, perhaps through the cross-linking of FtsZ protofilaments. Its function overlaps with FtsA. The sequence is that of Cell division protein SepF from Mycolicibacterium gilvum (strain PYR-GCK) (Mycobacterium gilvum (strain PYR-GCK)).